A 248-amino-acid chain; its full sequence is Leucyl/phenylalanyl-tRNA--protein transferase (248 aa).

It belongs to the L/F-transferase family.

The protein resides in the cytoplasm. The enzyme catalyses N-terminal L-lysyl-[protein] + L-leucyl-tRNA(Leu) = N-terminal L-leucyl-L-lysyl-[protein] + tRNA(Leu) + H(+). It catalyses the reaction N-terminal L-arginyl-[protein] + L-leucyl-tRNA(Leu) = N-terminal L-leucyl-L-arginyl-[protein] + tRNA(Leu) + H(+). The catalysed reaction is L-phenylalanyl-tRNA(Phe) + an N-terminal L-alpha-aminoacyl-[protein] = an N-terminal L-phenylalanyl-L-alpha-aminoacyl-[protein] + tRNA(Phe). Functions in the N-end rule pathway of protein degradation where it conjugates Leu, Phe and, less efficiently, Met from aminoacyl-tRNAs to the N-termini of proteins containing an N-terminal arginine or lysine. The chain is Leucyl/phenylalanyl-tRNA--protein transferase from Rhizorhabdus wittichii (strain DSM 6014 / CCUG 31198 / JCM 15750 / NBRC 105917 / EY 4224 / RW1) (Sphingomonas wittichii).